Consider the following 299-residue polypeptide: GTPase Era (299 aa).

The Era-type G domain occupies 4-171 (KSGFVAILGR…VDILSENLDE (168 aa)). Residues 12–19 (GRPNVGKS) form a G1 region. GTP is bound at residue 12–19 (GRPNVGKS). The G2 stretch occupies residues 38 to 42 (QTTRN). Positions 59–62 (DTPG) are G3. Residues 59-63 (DTPGI) and 121-124 (NKID) each bind GTP. The G4 stretch occupies residues 121–124 (NKID). The segment at 150–152 (ISA) is G5. The KH type-2 domain occupies 202 to 280 (TREEIPHSVA…FLETWVKVKK (79 aa)).

This sequence belongs to the TRAFAC class TrmE-Era-EngA-EngB-Septin-like GTPase superfamily. Era GTPase family. Monomer.

It localises to the cytoplasm. The protein resides in the cell membrane. In terms of biological role, an essential GTPase that binds both GDP and GTP, with rapid nucleotide exchange. Plays a role in 16S rRNA processing and 30S ribosomal subunit biogenesis and possibly also in cell cycle regulation and energy metabolism. In Streptococcus pneumoniae (strain P1031), this protein is GTPase Era.